Reading from the N-terminus, the 151-residue chain is NADH-quinone oxidoreductase subunit I 2 (151 aa).

4Fe-4S ferredoxin-type domains follow at residues 49-82 (PRLN…VTSE) and 93-122 (VTFT…LTQD). 8 residues coordinate [4Fe-4S] cluster: Cys-62, Cys-65, Cys-68, Cys-72, Cys-102, Cys-105, Cys-108, and Cys-112.

Belongs to the complex I 23 kDa subunit family. NDH-1 is composed of 14 different subunits. Subunits NuoA, H, J, K, L, M, N constitute the membrane sector of the complex. It depends on [4Fe-4S] cluster as a cofactor.

The protein localises to the cell inner membrane. The enzyme catalyses a quinone + NADH + 5 H(+)(in) = a quinol + NAD(+) + 4 H(+)(out). In terms of biological role, NDH-1 shuttles electrons from NADH, via FMN and iron-sulfur (Fe-S) centers, to quinones in the respiratory chain. The immediate electron acceptor for the enzyme in this species is believed to be ubiquinone. Couples the redox reaction to proton translocation (for every two electrons transferred, four hydrogen ions are translocated across the cytoplasmic membrane), and thus conserves the redox energy in a proton gradient. The chain is NADH-quinone oxidoreductase subunit I 2 from Solibacter usitatus (strain Ellin6076).